Here is a 1876-residue protein sequence, read N- to C-terminus: 1,3-beta-glucan synthase component FKS1 (1876 aa).

Polar residues-rich tracts occupy residues 1 to 25 (MNTDQQPYQGQTDYTQGPGNGQSQE) and 60 to 71 (QPPNESYDQDYT). Positions 1 to 108 (MNTDQQPYQG…PGTPGYDSYG (108 aa)) are disordered. Residues 1–454 (MNTDQQPYQG…WLHLVTNFNR (454 aa)) are Cytoplasmic-facing. Lysine 259 is covalently cross-linked (Glycyl lysine isopeptide (Lys-Gly) (interchain with G-Cter in ubiquitin)). A phosphothreonine mark is found at threonine 269 and threonine 272. Residues lysine 275 and lysine 386 each participate in a glycyl lysine isopeptide (Lys-Gly) (interchain with G-Cter in ubiquitin) cross-link. The chain crosses the membrane as a helical span at residues 455 to 475 (IWVMHISIFWMYFAYNSPTFY). The Extracellular portion of the chain corresponds to 476-492 (THNYQQLVDNQPLAAYK). A helical transmembrane segment spans residues 493–513 (WASCALGGTVASLIQIVATLC). Residues 514–531 (EWSFVPRKWAGAQHLSRR) lie on the Cytoplasmic side of the membrane. Residues 532-552 (FWFLCIIFGINLGPIIFVFAY) form a helical membrane-spanning segment. The Extracellular segment spans residues 553–563 (DKDTVYSTAAH). A helical membrane pass occupies residues 564–584 (VVAAVMFFVAVATIIFFSIMP). At 585–621 (LGGLFTSYMKKSTRRYVASQTFTAAFAPLHGLDRWMS) the chain is on the cytoplasmic side. A helical transmembrane segment spans residues 622-642 (YLVWVTVFAAKYSESYYFLVL). Topologically, residues 643–678 (SLRDPIRILSTTAMRCTGEYWWGAVLCKVQPKIVLG) are extracellular. The chain crosses the membrane as a helical span at residues 679-699 (LVIATDFILFFLDTYLWYIIV). The Cytoplasmic portion of the chain corresponds to 700–1358 (NTIFSVGKSF…QPAVDWVRRY (659 aa)). Residues lysine 910 and lysine 915 each participate in a glycyl lysine isopeptide (Lys-Gly) (interchain with G-Cter in ubiquitin) cross-link. Residues 1359–1379 (TLSIFIVFWIAFVPIVVQELI) traverse the membrane as a helical segment. The Extracellular portion of the chain corresponds to 1380-1444 (ERGLWKATQR…RIPFSILYSR (65 aa)). Residues 1445–1465 (FAGSAIYMGARSMLMLLFGTV) traverse the membrane as a helical segment. At 1466–1469 (AHWQ) the chain is on the cytoplasmic side. Residues 1470-1490 (APLLWFWASLSSLIFAPFVFN) traverse the membrane as a helical segment. Topologically, residues 1491–1560 (PHQFAWEDFF…DASRAHRTNL (70 aa)) are extracellular. Glycyl lysine isopeptide (Lys-Gly) (interchain with G-Cter in ubiquitin) cross-links involve residues lysine 1539 and lysine 1547. The helical transmembrane segment at 1561–1581 (IMAEIIPCAIYAAGCFIAFTF) threads the bilayer. Residues 1582–1601 (INAQTGVKTTDDDRVNSVLR) lie on the Cytoplasmic side of the membrane. The helical transmembrane segment at 1602–1622 (IIICTLAPIAVNLGVLFFCMG) threads the bilayer. At 1623–1643 (MSCCSGPLFGMCCKKTGSVMA) the chain is on the extracellular side. Residues 1644 to 1664 (GIAHGVAVIVHIAFFIVMWVL) traverse the membrane as a helical segment. Over 1665-1672 (ESFNFVRM) the chain is Cytoplasmic. A helical transmembrane segment spans residues 1673 to 1695 (LIGVVTCIQCQRLIFHCMTALML). Topologically, residues 1696–1802 (TREFKNDHAN…RKRMVKKYCS (107 aa)) are extracellular. Residues 1803–1823 (LYFLVLAIFAGCIIGPAVASA) form a helical membrane-spanning segment. At 1824 to 1876 (KIHKHIGDSLDGVVHNLFQPINTTNNDTGSQMSTYQSHYYTHTPSLKTWSTIK) the chain is on the cytoplasmic side.

It belongs to the glycosyltransferase 48 family. Component of the 1,3-beta-glucan synthase (GS) complex, composed of two alternate catalytic subunits FKS1 or GSC2, and a regulatory subunit RHO1. Interacts with RHO1, which is a GTP-binding protein.

The protein localises to the mitochondrion. Its subcellular location is the cell membrane. It catalyses the reaction [(1-&gt;3)-beta-D-glucosyl](n) + UDP-alpha-D-glucose = [(1-&gt;3)-beta-D-glucosyl](n+1) + UDP + H(+). Functionally, alternate catalytic subunit of the 1,3-beta-glucan synthase (GS) complex. Synthesizes 1,3-beta-glucan, a major structural component of the yeast cell wall. Involved in cell wall synthesis, maintenance and remodeling. The sequence is that of 1,3-beta-glucan synthase component FKS1 (FKS1) from Saccharomyces cerevisiae (strain ATCC 204508 / S288c) (Baker's yeast).